A 244-amino-acid polypeptide reads, in one-letter code: HTH-type transcriptional regulator Cmr (244 aa).

Residue 41-160 (GSAPLHRDDV…RRWLSSVAQR (120 aa)) participates in a nucleoside 3',5'-cyclic phosphate binding. In terms of domain architecture, HTH crp-type spans 174–237 (RPLPAQVAQL…YAVIEITDQH (64 aa)). The segment at residues 197–216 (QRTLAAMLGAQRPSINKILK) is a DNA-binding region (H-T-H motif).

Its function is as follows. Positively regulates the expression of at least groEL2. In Mycobacterium tuberculosis (strain CDC 1551 / Oshkosh), this protein is HTH-type transcriptional regulator Cmr (cmr).